The chain runs to 114 residues: uncharacterized protein (114 aa).

Positions 31–72 form a coiled coil; it reads EFEKLVSEQMKTMDKLLDLQSELDRCKQIEAELRHLERDARL.

This is an uncharacterized protein from Bacillus subtilis (strain 168).